Consider the following 198-residue polypeptide: Protoplast secreted protein 2 (198 aa).

The N-terminal stretch at 1–21 is a signal peptide; that stretch reads MPRVAIIIYTLYGHVAATAEA. The region spanning 22 to 191 is the Flavodoxin-like domain; it reads EKKGIEAAGG…QVHEIQGKTF (170 aa).

It belongs to the WrbA family.

The protein resides in the secreted. The chain is Protoplast secreted protein 2 (PST2) from Saccharomyces cerevisiae (strain ATCC 204508 / S288c) (Baker's yeast).